Reading from the N-terminus, the 211-residue chain is Probable nicotinate-nucleotide adenylyltransferase (211 aa).

It belongs to the NadD family.

The enzyme catalyses nicotinate beta-D-ribonucleotide + ATP + H(+) = deamido-NAD(+) + diphosphate. The protein operates within cofactor biosynthesis; NAD(+) biosynthesis; deamido-NAD(+) from nicotinate D-ribonucleotide: step 1/1. Its function is as follows. Catalyzes the reversible adenylation of nicotinate mononucleotide (NaMN) to nicotinic acid adenine dinucleotide (NaAD). This Shewanella frigidimarina (strain NCIMB 400) protein is Probable nicotinate-nucleotide adenylyltransferase.